The following is a 97-amino-acid chain: Large ribosomal subunit protein bL27 (97 aa).

Positions 1 to 12 (MLNLNLANLQFM) are excised as a propeptide. The segment at 15–37 (KKGGGSTSNGRDSQAKRLGAKAA) is disordered.

This sequence belongs to the bacterial ribosomal protein bL27 family. The N-terminus is cleaved by ribosomal processing cysteine protease Prp.

This chain is Large ribosomal subunit protein bL27, found in Streptococcus suis (strain 98HAH33).